The primary structure comprises 577 residues: Proline--tRNA ligase (577 aa).

It belongs to the class-II aminoacyl-tRNA synthetase family. ProS type 1 subfamily. Homodimer.

It localises to the cytoplasm. It catalyses the reaction tRNA(Pro) + L-proline + ATP = L-prolyl-tRNA(Pro) + AMP + diphosphate. Its function is as follows. Catalyzes the attachment of proline to tRNA(Pro) in a two-step reaction: proline is first activated by ATP to form Pro-AMP and then transferred to the acceptor end of tRNA(Pro). As ProRS can inadvertently accommodate and process non-cognate amino acids such as alanine and cysteine, to avoid such errors it has two additional distinct editing activities against alanine. One activity is designated as 'pretransfer' editing and involves the tRNA(Pro)-independent hydrolysis of activated Ala-AMP. The other activity is designated 'posttransfer' editing and involves deacylation of mischarged Ala-tRNA(Pro). The misacylated Cys-tRNA(Pro) is not edited by ProRS. This Helicobacter pylori (strain HPAG1) protein is Proline--tRNA ligase.